Here is a 151-residue protein sequence, read N- to C-terminus: Small ribosomal subunit protein uS15 (151 aa).

Lysine 27 carries the N6-acetyllysine; alternate modification. An N6-succinyllysine; alternate modification is found at lysine 27. Lysine 27 is covalently cross-linked (Glycyl lysine isopeptide (Lys-Gly) (interchain with G-Cter in ubiquitin)). Serine 30 bears the Phosphoserine mark. Lysine 34 carries the post-translational modification N6-succinyllysine. Tyrosine 38 bears the Phosphotyrosine mark. Lysine 43 participates in a covalent cross-link: Glycyl lysine isopeptide (Lys-Gly) (interchain with G-Cter in SUMO2).

Belongs to the universal ribosomal protein uS15 family. As to quaternary structure, component of the small ribosomal subunit. Part of the small subunit (SSU) processome, composed of more than 70 proteins and the RNA chaperone small nucleolar RNA (snoRNA) U3. Ubiquitinated at Lys-27 by RNF14 and RNF25 in response to ribosome collisions (ribosome stalling).

It localises to the cytoplasm. The protein resides in the nucleus. Its subcellular location is the nucleolus. Functionally, component of the small ribosomal subunit. The ribosome is a large ribonucleoprotein complex responsible for the synthesis of proteins in the cell. Part of the small subunit (SSU) processome, first precursor of the small eukaryotic ribosomal subunit. During the assembly of the SSU processome in the nucleolus, many ribosome biogenesis factors, an RNA chaperone and ribosomal proteins associate with the nascent pre-rRNA and work in concert to generate RNA folding, modifications, rearrangements and cleavage as well as targeted degradation of pre-ribosomal RNA by the RNA exosome. This is Small ribosomal subunit protein uS15 (RPS13) from Cricetulus griseus (Chinese hamster).